The primary structure comprises 479 residues: MSIVVKNNIHWVGQRDWEVRDFHGTEYKTLRGSSYNSYLIREEKNVLIDTVDHKFSREFVQNLRNEIDLADIDYIVINHAEEDHAGALTELMAQIPDTPIYCTANAIDSINGHHHHPEWNFNVVKTGDTLDIGNGKQLIFVETPMLHWPDSMMTYLTGDAVLFSNDAFGQHYCDEHLFNDEVDQTELFEQCQRYYANILTPFSRLVTPKITEILGFNLPVDMIATSHGVVWRDNPTQIVELYLKWAADYQEDRITIFYDTMSNNTRMMADAIAQGIAETDPRVAVKIFNVARSDKNEILTNVFRSKGVLVGTSTMNNVMMPKIAGLVEEMTGLRFRNKRASAFGSHGWSGGAVDRLSTRLQDAGFEMSLSLKAKWRPDQDALELCREHGREIARQWALAPLPQSTVNKVVKEETSATTTADLGPRMQCSVCQWIYDPAKGEPMQDVAPGTPWSEVPDNFLCPECSLGKDVFEELASEAK.

Residues 30–210 (LRGSSYNSYL…PFSRLVTPKI (181 aa)) form a zinc metallo-hydrolase region. Positions 79, 81, 83, 147, 166, and 227 each coordinate Fe cation. Positions 254–393 (ITIFYDTMSN…LCREHGREIA (140 aa)) constitute a Flavodoxin-like domain. Residues 260–264 (TMSNN) and 342–369 (AFGSHGWSGGAVDRLSTRLQDAGFEMSL) each bind FMN. Residues 423-474 (GPRMQCSVCQWIYDPAKGEPMQDVAPGTPWSEVPDNFLCPECSLGKDVFEEL) form the Rubredoxin-like domain. Fe cation-binding residues include Cys428, Cys431, Cys461, and Cys464.

This sequence in the N-terminal section; belongs to the zinc metallo-hydrolase group 3 family. Homotetramer. The cofactor is Fe cation. Requires FMN as cofactor.

Its subcellular location is the cytoplasm. Its pathway is nitrogen metabolism; nitric oxide reduction. Anaerobic nitric oxide reductase; uses NADH to detoxify nitric oxide (NO), protecting several 4Fe-4S NO-sensitive enzymes. Has at least 2 reductase partners, only one of which (NorW, flavorubredoxin reductase) has been identified. NO probably binds to the di-iron center; electrons enter from the NorW at rubredoxin and are transferred sequentially to the FMN center and the di-iron center. Also able to function as an aerobic oxygen reductase. In Shigella boydii serotype 4 (strain Sb227), this protein is Anaerobic nitric oxide reductase flavorubredoxin.